The primary structure comprises 99 residues: RING finger protein Z (99 aa).

G2 is lipidated: N-myristoyl glycine; by host. The RING-type; atypical zinc-finger motif lies at 31–67 (CKSCWFENKGLVECNNHYLCLNCLTLLLSVSNRCPIC). The segment at 74-99 (KLRPSAAPTAPPTGAADSIRPPPYSP) is disordered. Positions 77–89 (PSAAPTAPPTGAA) are enriched in low complexity. The PTAP/PSAP motif signature appears at 81-84 (PTAP). Residues 94–97 (PPPY) carry the PPXY motif motif.

The protein belongs to the arenaviridae Z protein family. Interacts with protein NP; this interaction probably directs the encapsidated genome to budding sites. Interacts (via RING domain) with polymerase L; this interaction inhibits viral transcription and replication, Z partially blocks the product exit tunnel for the releasing nascent RNA product. Interacts with the glycoprotein complex; this interaction plays a role in virion budding. Interacts with host eIF4E; this interaction results in eIF4E reduced affinity for its substrate, the 5'-m7 G cap structure. Interacts (via late-budding domain) with host TSG101; this interaction is essential for budding and release of viral particles. Interacts with host RPLP0; this interaction may serve to load ribosome-like particles inside the virion. Interacts with host PML; this interaction induces PML bodies redistribution in the cytoplasm upon viral infection. Interacts with host TAX1BP1. In terms of processing, myristoylation is required for the role of RING finger protein Z in assembly and budding.

The protein localises to the virion. It is found in the host cytoplasm. It localises to the host perinuclear region. Its subcellular location is the host cell membrane. Functionally, plays a crucial role in virion assembly and budding. Expressed late in the virus life cycle, it acts as an inhibitor of viral transcription and RNA synthesis by interacting with the viral polymerase L. Presumably recruits the NP encapsidated genome to cellular membranes at budding sites via direct interaction with NP. Plays critical roles in the final steps of viral release by interacting with host TSG101, a member of the vacuolar protein-sorting pathway and using other cellular host proteins involved in vesicle formation pathway. The budding of the virus progeny occurs after association of protein Z with the viral glycoprotein complex SSP-GP1-GP2 at the cell periphery, step that requires myristoylation of protein Z. Also selectively represses protein production by associating with host eIF4E. In cell-based minigenome assay, has an inhibitory effect on the ribonucleoprotein machinery (vRNP), which is responsible for the replication and transcription of the viral genome. This is RING finger protein Z from Homo sapiens (Human).